A 428-amino-acid chain; its full sequence is Glutamine synthetase, chloroplastic (428 aa).

The N-terminal 49 residues, 1–49 (MAQILAASPTCQMRLTKPSSIASSKLWNSVVLKQKKQSSSKVRSFKVMA), are a transit peptide targeting the chloroplast. One can recognise a GS beta-grasp domain in the interval 75 to 155 (IIAEYIWIGG…VICDTYTPAG (81 aa)). The segment at 94–120 (RTLEKPVEDPSELPKWNYDGSSTGQAP) is disordered. Phosphoserine is present on Ser104. The GS catalytic domain maps to 159–428 (PTNKRARAAE…LAAQKLSLKV (270 aa)).

Belongs to the glutamine synthetase family. Homooctamer.

Its subcellular location is the plastid. It is found in the chloroplast. The enzyme catalyses L-glutamate + NH4(+) + ATP = L-glutamine + ADP + phosphate + H(+). Functionally, the light-modulated chloroplast enzyme, encoded by a nuclear gene and expressed primarily in leaves, is responsible for the reassimilation of the ammonia generated by photorespiration. The sequence is that of Glutamine synthetase, chloroplastic (GLN2) from Brassica napus (Rape).